An 875-amino-acid polypeptide reads, in one-letter code: Lysine-specific demethylase JMJ26 (875 aa).

Positions 31–103 (KPVEATSLSS…RSSVKKRATT (73 aa)) are disordered. The Nuclear localization signal signature appears at 62–69 (RKRSKADE). Positions 79–93 (KCDDENKCEENEKKQ) are enriched in basic and acidic residues. The Zn(2+) site is built by Cys-193, Cys-196, Cys-207, Cys-210, Cys-216, Cys-219, Cys-236, Cys-239, Cys-322, Cys-325, Cys-339, and Cys-347. The RING-type; degenerate zinc-finger motif lies at 193–240 (CHQCSKGERRYLFICTFCEVRLYCFPCIKKWYPHLSTDDILEKCPFCR). The B box-type; degenerate zinc-finger motif lies at 317 to 347 (EERVFCNHCATSIVDLHRSCPKCSYELCLNC). The 224-residue stretch at 614–837 (PRSGILNIAT…ECLRLTDEFR (224 aa)) folds into the JmjC domain. Positions 658, 660, and 805 each coordinate Fe cation.

It belongs to the JARID1 histone demethylase family. Requires Fe(2+) as cofactor. In terms of tissue distribution, expressed in inflorescences, roots, siliques, leaves and stems.

It is found in the nucleus. Its function is as follows. May function as histone H3 lysine demethylase and be involved in regulation of gene expression. The chain is Lysine-specific demethylase JMJ26 from Arabidopsis thaliana (Mouse-ear cress).